A 317-amino-acid polypeptide reads, in one-letter code: DNA repair nuclease/redox regulator APEX1 (317 aa).

The segment at 1–58 is disordered; that stretch reads MPKRGKKAAADDGEEPKSEPETKKSKGAAKKTEKEAAGEGPVLYEDPPDQKTSPSGKS. Residues 2–32 form a necessary for interaction with YBX1, binding to RNA, association together with NPM1 to rRNA, endoribonuclease activity on abasic RNA and localization in the nucleoli region; sequence PKRGKKAAADDGEEPKSEPETKKSKGAAKKT. Residues Lys-6 and Lys-7 each carry the N6-acetyllysine; by EP300 modification. The Nuclear localization signal (NLS) motif lies at 8–12; the sequence is AAADD. The span at 15-37 shows a compositional bias: basic and acidic residues; the sequence is EPKSEPETKKSKGAAKKTEKEAA. A Phosphoserine modification is found at Ser-18. The necessary for interaction with NPM1 and for efficient rRNA binding stretch occupies residues 22–32; it reads TKKSKGAAKKT. N6-acetyllysine is present on residues Lys-26, Lys-30, Lys-31, and Lys-34. Ser-53 bears the Phosphoserine mark. A Nuclear export signal (NES) motif is present at residues 63 to 79; it reads ICSWNVDGLRAWIKKKG. At Cys-64 the chain carries S-nitrosocysteine; alternate. Cys-64 and Cys-92 are joined by a disulfide. A Mg(2+)-binding site is contributed by Asp-69. At Cys-92 the chain carries S-nitrosocysteine; alternate. Residue Glu-95 participates in Mg(2+) binding. Residue Tyr-170 is part of the active site. Lys-196 is subject to N6-acetyllysine. Mg(2+) contacts are provided by Asp-209 and Asn-211. Asp-209 (proton donor/acceptor) is an active-site residue. A Phosphothreonine; by CDK5 modification is found at Thr-232. Residues 288–317 form a mitochondrial targeting sequence (MTS) region; the sequence is HSLLPALCDSKIRSKALGSDHCPITLYLAL. Asp-307 contributes to the Mg(2+) binding site. An S-nitrosocysteine modification is found at Cys-309.

Belongs to the DNA repair enzymes AP/ExoA family. Monomer. Homodimer; disulfide-linked. Component of the SET complex, composed of at least APEX1, SET, ANP32A, HMGB2, NME1 and TREX1. Associates with the dimer XRCC5/XRCC6 in a DNA-dependent manner. Interacts with SIRT1; the interaction is increased in the context of genotoxic stress. Interacts with HDAC1, HDAC2 and HDAC3; the interactions are not dependent on the APEX1 acetylation status. Interacts with XRCC1; the interaction is induced by SIRT1 and increased with the APEX1 acetylated form. Interacts with NPM1 (via N-terminal domain); the interaction is RNA-dependent and decreases in hydrogen peroxide-damaged cells. Interacts (via N-terminus) with YBX1 (via C-terminus); the interaction is increased in presence of APEX1 acetylated at Lys-6 and Lys-7. Interacts with HNRNPL; the interaction is DNA-dependent. Interacts (via N-terminus) with KPNA1 and KPNA2. Interacts with TXN; the interaction stimulates the FOS/JUN AP-1 complex DNA-binding activity in a redox-dependent manner. Interacts with GZMA, KRT8, MDM2, POLB, PRDX6, PRPF19, RPLP0, TOMM20 and WDR77. Binds to CDK5. Mg(2+) is required as a cofactor. It depends on Mn(2+) as a cofactor. Post-translationally, phosphorylated. Phosphorylation by kinase PKC or casein kinase CK2 results in enhanced redox activity that stimulates binding of the FOS/JUN AP-1 complex to its cognate binding site. AP-endodeoxyribonuclease activity is not affected by CK2-mediated phosphorylation. Phosphorylation of Thr-232 by CDK5 in response to MPP(+)/MPTP (1-methyl-4-phenylpyridinium) reduces AP-endodeoxyribonuclease activity resulting in accumulation of DNA damage and contributing to neuronal death. Acetylated on Lys-6 and Lys-7. Acetylation is increased by the transcriptional coactivator EP300 acetyltransferase, genotoxic agents like H(2)O(2) and methyl methanesulfonate (MMS). Acetylation increases its binding affinity to the negative calcium response element (nCaRE) DNA promoter. The acetylated form induces a stronger binding of YBX1 to the Y-box sequence in the MDR1 promoter than the unacetylated form. Deacetylated on lysines. Lys-6 and Lys-7 are deacetylated by SIRT1. In terms of processing, cleaved at Lys-30 by granzyme A to create the mitochondrial form; leading in reduction of binding to DNA, AP endodeoxyribonuclease activity, redox activation of transcription factors and to enhanced cell death. Cleaved by granzyme K; leading to intracellular ROS accumulation and enhanced cell death after oxidative stress. Post-translationally, cys-64 and Cys-92 are nitrosylated in response to nitric oxide (NO) and lead to the exposure of the nuclear export signal (NES). Ubiquitinated by MDM2; leading to translocation to the cytoplasm and proteasomal degradation. Expressed in both resting and stimulated B cells stimulated to switch (at protein level).

It localises to the nucleus. It is found in the nucleolus. Its subcellular location is the nucleus speckle. The protein localises to the endoplasmic reticulum. The protein resides in the cytoplasm. It localises to the mitochondrion. It catalyses the reaction a deoxyribonucleotide-2'-deoxyribose-5'-monophosphate-DNA + H2O = a 5'-end 2'-deoxyribose-5'-monophosphate-DNA + a 3'-end 2'-deoxyribonucleotide-DNA + H(+). The catalysed reaction is Exonucleolytic cleavage in the 3'- to 5'-direction to yield nucleoside 5'-phosphates.. The enzyme catalyses a 3'-end 2'-deoxyribonucleotide-3'-phosphoglycolate-DNA + H2O = 2-phosphoglycolate + a 3'-end 2'-deoxyribonucleotide-DNA + H(+). It carries out the reaction a 3'-end 2'-deoxyribonucleotide-8-oxoguanine-DNA + H2O = 8-oxo-dGMP + a 3'-end 2'-deoxyribonucleotide-DNA + H(+). With respect to regulation, NPM1 stimulates endodeoxyribonuclease activity on double-stranded DNA with AP sites, but inhibits endoribonuclease activity on single-stranded RNA containing AP sites. Multifunctional protein that plays a central role in the cellular response to oxidative stress. The two major activities of APEX1 are DNA repair and redox regulation of transcriptional factors. Functions as an apurinic/apyrimidinic (AP) endodeoxyribonuclease in the base excision repair (BER) pathway of DNA lesions induced by oxidative and alkylating agents. Initiates repair of AP sites in DNA by catalyzing hydrolytic incision of the phosphodiester backbone immediately adjacent to the damage, generating a single-strand break with 5'-deoxyribose phosphate and 3'-hydroxyl ends. Also incises at AP sites in the DNA strand of DNA/RNA hybrids, single-stranded DNA regions of R-loop structures, and single-stranded RNA molecules. Operates at switch sites of immunoglobulin (Ig) constant regions where it mediates Ig isotype class switch recombination. Processes AP sites induced by successive action of AICDA and UNG. Generates staggered nicks in opposite DNA strands resulting in the formation of double-strand DNA breaks that are finally resolved via non-homologous end joining repair pathway. Has 3'-5' exodeoxyribonuclease activity on mismatched deoxyribonucleotides at the 3' termini of nicked or gapped DNA molecules during short-patch BER. Possesses DNA 3' phosphodiesterase activity capable of removing lesions (such as phosphoglycolate and 8-oxoguanine) blocking the 3' side of DNA strand breaks. Also acts as an endoribonuclease involved in the control of single-stranded RNA metabolism. Plays a role in regulating MYC mRNA turnover by preferentially cleaving in between UA and CA dinucleotides of the MYC coding region determinant (CRD). In association with NMD1, plays a role in the rRNA quality control process during cell cycle progression. Acts as a loading factor for POLB onto non-incised AP sites in DNA and stimulates the 5'-terminal deoxyribose 5'-phosphate (dRp) excision activity of POLB. Exerts reversible nuclear redox activity to regulate DNA binding affinity and transcriptional activity of transcriptional factors by controlling the redox status of their DNA-binding domain, such as the FOS/JUN AP-1 complex after exposure to IR. Involved in calcium-dependent down-regulation of parathyroid hormone (PTH) expression by binding to negative calcium response elements (nCaREs). Together with HNRNPL or the dimer XRCC5/XRCC6, associates with nCaRE, acting as an activator of transcriptional repression. May also play a role in the epigenetic regulation of gene expression by participating in DNA demethylation. Stimulates the YBX1-mediated MDR1 promoter activity, when acetylated at Lys-6 and Lys-7, leading to drug resistance. Plays a role in protection from granzyme-mediated cellular repair leading to cell death. Binds DNA and RNA. Associates, together with YBX1, on the MDR1 promoter. Together with NPM1, associates with rRNA. The chain is DNA repair nuclease/redox regulator APEX1 (Apex1) from Mus musculus (Mouse).